Here is a 383-residue protein sequence, read N- to C-terminus: ATP phosphoribosyltransferase regulatory subunit (383 aa).

It belongs to the class-II aminoacyl-tRNA synthetase family. HisZ subfamily. In terms of assembly, heteromultimer composed of HisG and HisZ subunits.

The protein resides in the cytoplasm. It participates in amino-acid biosynthesis; L-histidine biosynthesis; L-histidine from 5-phospho-alpha-D-ribose 1-diphosphate: step 1/9. Its function is as follows. Required for the first step of histidine biosynthesis. May allow the feedback regulation of ATP phosphoribosyltransferase activity by histidine. The chain is ATP phosphoribosyltransferase regulatory subunit from Desulfitobacterium hafniense (strain DSM 10664 / DCB-2).